We begin with the raw amino-acid sequence, 246 residues long: Nodulin-25 (246 aa).

The first 24 residues, 1-24 (MVYSNTYMLLGLGVFVLLSSHVLA), serve as a signal peptide directing secretion.

Its subcellular location is the symbiosome. It is found in the peribacteroid space. In terms of biological role, involved in the development and function of nodules. It might participate in the biological process of symbiotic nitrogen fixation. The sequence is that of Nodulin-25 (NMS-25) from Medicago sativa (Alfalfa).